Reading from the N-terminus, the 455-residue chain is MHIDTTAAPVAHAPRPFYRHLYFQVLCAIVAGALIGHFYPETGEALKPLGDAFIKLVKMIIAPVIFLTIVTGLAGMGTLKGVGSVVGKAFGYFLTFSTLALVVGLITANVIRPGAGMNIDPASLDASKVADYASKAHESSLTGFVMDIIPSTITSAFVDGNILQVLFVAILFGIGLILIGDKGKPVVALFEAISHAVFRMVDILMKAAPIGAFGAFAFTIGKYGIASVVNLATLVGTFYLTSALFVIVVLGTVCMLNGFSIFRLISYLKAEILLVLGTSSSESALPSLMEKMEKAGCKRSVVGLVVPTGYSFNLDGTNIYMTLAALFIAQATNTDLTLQQQILLLLVAMLSSKGAAGVTGAGFITLAATLSVVPTVPVAGMALILGVDRFMSECRSITNFIGNAVATVVVSRWEGALDREQFDRVLGGEAGGEVAPIHDLHGAPAGLRLNEASAD.

The next 8 helical transmembrane spans lie at His20–Pro40, Met59–Leu79, Gly91–Ile111, Gly160–Gly180, Pro209–Val229, Leu231–Gly251, Leu344–Ile364, and Ala367–Val387.

This sequence belongs to the dicarboxylate/amino acid:cation symporter (DAACS) (TC 2.A.23) family.

The protein localises to the cell inner membrane. Responsible for the transport of dicarboxylates such as succinate, fumarate, and malate from the periplasm across the membrane. The polypeptide is C4-dicarboxylate transport protein (Paracoccus denitrificans (strain Pd 1222)).